We begin with the raw amino-acid sequence, 182 residues long: NAD(P)H-quinone oxidoreductase subunit I, chloroplastic (182 aa).

4Fe-4S ferredoxin-type domains are found at residues 52-81 (GRIHFEFDKCIACEVCVRVCPINLPVVDWE) and 92-121 (KSYSIDFGVCIFCGNCVEYCPTNCLSMTEE). The [4Fe-4S] cluster site is built by Cys-61, Cys-64, Cys-67, Cys-71, Cys-101, Cys-104, Cys-107, and Cys-111.

The protein belongs to the complex I 23 kDa subunit family. In terms of assembly, NDH is composed of at least 16 different subunits, 5 of which are encoded in the nucleus. Requires [4Fe-4S] cluster as cofactor.

Its subcellular location is the plastid. The protein localises to the chloroplast thylakoid membrane. The enzyme catalyses a plastoquinone + NADH + (n+1) H(+)(in) = a plastoquinol + NAD(+) + n H(+)(out). It catalyses the reaction a plastoquinone + NADPH + (n+1) H(+)(in) = a plastoquinol + NADP(+) + n H(+)(out). In terms of biological role, NDH shuttles electrons from NAD(P)H:plastoquinone, via FMN and iron-sulfur (Fe-S) centers, to quinones in the photosynthetic chain and possibly in a chloroplast respiratory chain. The immediate electron acceptor for the enzyme in this species is believed to be plastoquinone. Couples the redox reaction to proton translocation, and thus conserves the redox energy in a proton gradient. The protein is NAD(P)H-quinone oxidoreductase subunit I, chloroplastic of Chaetosphaeridium globosum (Charophycean green alga).